The following is a 143-amino-acid chain: Nucleoside diphosphate kinase (143 aa).

Residues K11, F59, R87, T93, R104, and N114 each contribute to the ATP site. The active-site Pros-phosphohistidine intermediate is H117.

It belongs to the NDK family. In terms of assembly, homotetramer. Mg(2+) serves as cofactor.

The protein resides in the cytoplasm. It catalyses the reaction a 2'-deoxyribonucleoside 5'-diphosphate + ATP = a 2'-deoxyribonucleoside 5'-triphosphate + ADP. It carries out the reaction a ribonucleoside 5'-diphosphate + ATP = a ribonucleoside 5'-triphosphate + ADP. In terms of biological role, major role in the synthesis of nucleoside triphosphates other than ATP. The ATP gamma phosphate is transferred to the NDP beta phosphate via a ping-pong mechanism, using a phosphorylated active-site intermediate. The chain is Nucleoside diphosphate kinase from Pseudoalteromonas translucida (strain TAC 125).